We begin with the raw amino-acid sequence, 252 residues long: MAIHADTHDDLRLFQTGEHACGYWSDRQARDLVLDPHDPRLGALYPQALAWGFRRSGDLVYRPHCERCRACVPVRIAVDAFHPDRSQRRCLARNQDLVVRVVAAERTEEQLALYRQYLQHRHPGGGMDTHGAAEFDQFLIGGWSHGRFLEIREPAVDHVPGRLLAVAVTDVTEHALSAVYTFYAPDAAARSLGTFAILEQIQWARRERRAHLYLGYWIEGHAKMNYKRRFNALEAYDGRHWRGLPAAQGSAR.

Belongs to the R-transferase family. Bpt subfamily.

It is found in the cytoplasm. The enzyme catalyses N-terminal L-glutamyl-[protein] + L-leucyl-tRNA(Leu) = N-terminal L-leucyl-L-glutamyl-[protein] + tRNA(Leu) + H(+). It catalyses the reaction N-terminal L-aspartyl-[protein] + L-leucyl-tRNA(Leu) = N-terminal L-leucyl-L-aspartyl-[protein] + tRNA(Leu) + H(+). In terms of biological role, functions in the N-end rule pathway of protein degradation where it conjugates Leu from its aminoacyl-tRNA to the N-termini of proteins containing an N-terminal aspartate or glutamate. This is Aspartate/glutamate leucyltransferase from Xanthomonas campestris pv. campestris (strain B100).